A 703-amino-acid polypeptide reads, in one-letter code: Arf-GAP with GTPase, ANK repeat and PH domain-containing protein 9 (703 aa).

Disordered regions lie at residues 249 to 287, 299 to 323, and 427 to 449; these read KRNG…TPTP, FTSE…TIGS, and SSTT…KHLK. Over residues 271-286 the composition is skewed to polar residues; it reads QEDPQFSVPPTANTPT. Residues 303 to 318 show a composition bias toward basic and acidic residues; the sequence is KGSDPDKERKAPENHA. The 162-residue stretch at 327–488 folds into the PH domain; the sequence is IPIKQGMLLK…WVQAIQSQIL (162 aa). Positions 509–629 constitute an Arf-GAP domain; it reads AMALQSIQNM…LFLAPLPCTE (121 aa). A C4-type zinc finger spans residues 524–547; that stretch reads CVDCETQNPKWASLNLGVLMCIEC. The stretch at 631–700 is one ANK repeat; sequence SLGQQLLRAT…WTSWPEMPTG (70 aa).

It belongs to the centaurin gamma-like family.

In terms of biological role, putative GTPase-activating protein. This is Arf-GAP with GTPase, ANK repeat and PH domain-containing protein 9 (AGAP9) from Homo sapiens (Human).